Here is a 217-residue protein sequence, read N- to C-terminus: Thymidylate kinase (217 aa).

12–19 serves as a coordination point for ATP; sequence GIDGSGKS.

The protein belongs to the thymidylate kinase family.

The enzyme catalyses dTMP + ATP = dTDP + ADP. Functionally, phosphorylation of dTMP to form dTDP in both de novo and salvage pathways of dTTP synthesis. The sequence is that of Thymidylate kinase from Cereibacter sphaeroides (strain ATCC 17023 / DSM 158 / JCM 6121 / CCUG 31486 / LMG 2827 / NBRC 12203 / NCIMB 8253 / ATH 2.4.1.) (Rhodobacter sphaeroides).